A 121-amino-acid chain; its full sequence is Large ribosomal subunit protein uL14c (121 aa).

It belongs to the universal ribosomal protein uL14 family. Part of the 50S ribosomal subunit.

The protein resides in the plastid. The protein localises to the chloroplast. Binds to 23S rRNA. The chain is Large ribosomal subunit protein uL14c from Guillardia theta (Cryptophyte).